Here is a 258-residue protein sequence, read N- to C-terminus: Bidirectional sugar transporter SWEET7 (258 aa).

The Extracellular segment spans residues 1–11 (MVFAHLNLLRK). A helical transmembrane segment spans residues 12–32 (IVGIIGNFIALCLFLSPTPTF). The MtN3/slv 1 domain maps to 12–100 (IVGIIGNFIA…IFFVYCGRQK (89 aa)). Topologically, residues 33–46 (VRIVKKKSVEEYSP) are cytoplasmic. A helical transmembrane segment spans residues 47–67 (IPYLATLINCLVWVLYGLPTV). The Extracellular portion of the chain corresponds to 68-73 (HPDSTL). Residues 74–94 (VITINGTGILIEIVFLTIFFV) traverse the membrane as a helical segment. The Cytoplasmic segment spans residues 95–102 (YCGRQKQR). The chain crosses the membrane as a helical span at residues 103–123 (LIISAVIAAETAFIAILAVLV). The Extracellular portion of the chain corresponds to 124 to 134 (LTLQHTTEKRT). A helical membrane pass occupies residues 135–155 (MSVGIVCCVFNVMMYASPLSV). The region spanning 136–221 (SVGIVCCVFN…LYGAYYKSTK (86 aa)) is the MtN3/slv 2 domain. Over 156–166 (MKMVIKTKSVE) the chain is Cytoplasmic. A helical transmembrane segment spans residues 167–187 (FMPFWLSVAGFLNAGVWTIYA). Over 188–193 (LMPFDP) the chain is Extracellular. Residues 194 to 214 (FMAIPNGIGCLFGLAQLILYG) form a helical membrane-spanning segment. Residues 215–258 (AYYKSTKRIMAERENQPGYVGLSSAIARTGSEKTANTNQEPNNV) lie on the Cytoplasmic side of the membrane.

This sequence belongs to the SWEET sugar transporter family. As to quaternary structure, forms heterooligomers with SWEET8, SWEET11, SWEET13, SWEET16 and SWEET17.

The protein resides in the cell membrane. Mediates both low-affinity uptake and efflux of sugar across the plasma membrane. The polypeptide is Bidirectional sugar transporter SWEET7 (Arabidopsis thaliana (Mouse-ear cress)).